Here is a 61-residue protein sequence, read N- to C-terminus: Japonicin-1CDYa (61 aa).

The signal sequence occupies residues 1 to 22 (MFTLKKSLLLLFFLGVINVSLC). The propeptide occupies 23–45 (EEERDADEEERRDDPEERDVEVE). Cysteine 55 and cysteine 61 are joined by a disulfide.

It belongs to the frog skin active peptide (FSAP) family. Brevinin subfamily. As to expression, expressed by the skin glands.

Its subcellular location is the secreted. Its function is as follows. Antimicrobial peptide. Has low activity against the Gram-positive bacterium S.aureus (MIC&gt;100 uM) and the Gram-negative bacterium E.coli (MIC=25 uM). Lacks hemolytic activity against human erythrocytes. The sequence is that of Japonicin-1CDYa from Rana dybowskii (Dybovsky's frog).